Here is a 419-residue protein sequence, read N- to C-terminus: UDP-N-acetylglucosamine 1-carboxyvinyltransferase 2 (419 aa).

24–25 (KN) serves as a coordination point for phosphoenolpyruvate. Arginine 94 contacts UDP-N-acetyl-alpha-D-glucosamine. The Proton donor role is filled by cysteine 118. Residue cysteine 118 is modified to 2-(S-cysteinyl)pyruvic acid O-phosphothioketal. Residues 123–127 (RPIDQ), aspartate 307, and isoleucine 329 contribute to the UDP-N-acetyl-alpha-D-glucosamine site.

The protein belongs to the EPSP synthase family. MurA subfamily.

The protein resides in the cytoplasm. It catalyses the reaction phosphoenolpyruvate + UDP-N-acetyl-alpha-D-glucosamine = UDP-N-acetyl-3-O-(1-carboxyvinyl)-alpha-D-glucosamine + phosphate. It functions in the pathway cell wall biogenesis; peptidoglycan biosynthesis. Functionally, cell wall formation. Adds enolpyruvyl to UDP-N-acetylglucosamine. This Staphylococcus aureus (strain MRSA252) protein is UDP-N-acetylglucosamine 1-carboxyvinyltransferase 2.